Consider the following 215-residue polypeptide: Cytochrome b6 (215 aa).

A helical transmembrane segment spans residues 32 to 52; it reads IFYCFGGIVFTCFLVQVATGF. Cys35 contacts heme c. Heme b contacts are provided by His86 and His100. The next 3 membrane-spanning stretches (helical) occupy residues 90 to 110, 116 to 136, and 186 to 206; these read ASMM…TGGF, LTWV…VTGY, and AHTF…FLMI. Heme b is bound by residues His187 and His202.

The protein belongs to the cytochrome b family. PetB subfamily. As to quaternary structure, the 4 large subunits of the cytochrome b6-f complex are cytochrome b6, subunit IV (17 kDa polypeptide, PetD), cytochrome f and the Rieske protein, while the 4 small subunits are PetG, PetL, PetM and PetN. The complex functions as a dimer. The cofactor is heme b. Heme c is required as a cofactor.

Its subcellular location is the plastid. The protein resides in the chloroplast thylakoid membrane. Component of the cytochrome b6-f complex, which mediates electron transfer between photosystem II (PSII) and photosystem I (PSI), cyclic electron flow around PSI, and state transitions. In Skeletonema costatum (Marine centric diatom), this protein is Cytochrome b6.